Reading from the N-terminus, the 327-residue chain is Biotin synthase (327 aa).

Positions 52–279 constitute a Radical SAM core domain; the sequence is NAIQRSTLLS…TSWVRLSAGR (228 aa). The [4Fe-4S] cluster site is built by C67, C71, and C74. The [2Fe-2S] cluster site is built by C111, C142, C202, and R274.

Belongs to the radical SAM superfamily. Biotin synthase family. As to quaternary structure, homodimer. [4Fe-4S] cluster is required as a cofactor. [2Fe-2S] cluster serves as cofactor.

The enzyme catalyses (4R,5S)-dethiobiotin + (sulfur carrier)-SH + 2 reduced [2Fe-2S]-[ferredoxin] + 2 S-adenosyl-L-methionine = (sulfur carrier)-H + biotin + 2 5'-deoxyadenosine + 2 L-methionine + 2 oxidized [2Fe-2S]-[ferredoxin]. The protein operates within cofactor biosynthesis; biotin biosynthesis; biotin from 7,8-diaminononanoate: step 2/2. In terms of biological role, catalyzes the conversion of dethiobiotin (DTB) to biotin by the insertion of a sulfur atom into dethiobiotin via a radical-based mechanism. The sequence is that of Biotin synthase from Dechloromonas aromatica (strain RCB).